The chain runs to 373 residues: Gibberellin 3-beta-dioxygenase 2 (373 aa).

A Fe2OG dioxygenase domain is found at 203 to 304; it reads MTATVHLNWY…RVSLGYFLGP (102 aa). Position 212 (Y212) interacts with 2-oxoglutarate. The Fe cation site is built by H227, D229, and H285. 2-oxoglutarate-binding residues include R295 and S297.

It belongs to the iron/ascorbate-dependent oxidoreductase family. It depends on L-ascorbate as a cofactor. Requires Fe(2+) as cofactor. In terms of tissue distribution, highly expressed in elongating leaves. Expressed in unopened flowers. Expressed at low levels in leaf blades, shoots, rachis, stems and young panicles.

It catalyses the reaction gibberellin A20 + 2-oxoglutarate + O2 = gibberellin A1 + succinate + CO2. It functions in the pathway plant hormone biosynthesis; gibberellin biosynthesis. Functionally, catalyzes the 3-beta-hydroxylation of the inactive gibberellin precursors, leading to the formation of bioactive gibberellins. In vitro, converts the precursors GA20, GA5, GA44 and GA9 to the corresponding 3-beta-hydroxylated active products GA1, GA3, GA38 and GA4, respectively. Involved in the production of bioactive GA for vegetative growth and development. Controls the elongation of the vegetative shoot and plant height by the regulation of active gibberellin levels. This chain is Gibberellin 3-beta-dioxygenase 2, found in Oryza sativa subsp. japonica (Rice).